Reading from the N-terminus, the 114-residue chain is T-cell leukemia/lymphoma protein 1A (114 aa).

The protein belongs to the TCL1 family. As to quaternary structure, homodimer. Interacts with AKT1, AKT2 and AKT3 (via PH domain). Interacts with PNPT1; the interaction has no effect on PNPT1 exonuclease activity. In terms of tissue distribution, restricted in the T-cell lineage to immature thymocytes and activated peripheral lymphocytes. Preferentially expressed early in T- and B-lymphocyte differentiation.

It localises to the cytoplasm. The protein localises to the nucleus. It is found in the microsome. The protein resides in the endoplasmic reticulum. In terms of biological role, enhances the phosphorylation and activation of AKT1, AKT2 and AKT3. Promotes nuclear translocation of AKT1. Enhances cell proliferation, stabilizes mitochondrial membrane potential and promotes cell survival. The protein is T-cell leukemia/lymphoma protein 1A (TCL1A) of Homo sapiens (Human).